Here is a 491-residue protein sequence, read N- to C-terminus: MRLPWVIFCTVLLLIFTNNSNADIPGCNYYDTVDISYIERQNDSYLYDDIEIPASLTGYYEFRQFGDGSITPIEKHLRACVCSVRPCIRICCPAKNFLANGKCDDGLKEELARFKPYIYFTYMDLQARVPLTDMAIIRDEFFDCDEMIYISDFNYFLEEVSIQIFNKCGLIVWFQDGKFWVTVDLFMEKQDYCLYRHNFDSDFPKSMWIIRHRCTSHISPGSLEILIITMICFVLTIAVYLYIKKLRNVTGKCIVCCIVSRFIQCLIMILDHLNLLNGICSPAGYSSHFFRMASNLWLSVISYHTWKVLTSLNRVDPNYRFLRYNAFVWSTAAIMTGSIYIVNQIWENDPSKWNWLPLVGFIRCSVKDWHPSVWIYISGPSLALSTFNVAMFALTAIYIRKVKGGINKFTNEEEGRINCINFDSQTYLQFLRLSIVMGLTWIFNVIPYSARLHIFWEWVGIISEYFHSAFGIVLFVLLVLKRSTWTLMMDS.

The N-terminal stretch at 1–22 is a signal peptide; that stretch reads MRLPWVIFCTVLLLIFTNNSNA. N-linked (GlcNAc...) asparagine glycosylation is found at Asn-18 and Asn-42. Residues 23 to 167 are Extracellular-facing; sequence DIPGCNYYDT…EEVSIQIFNK (145 aa). 3 disulfide bridges follow: Cys-27–Cys-80, Cys-82–Cys-87, and Cys-92–Cys-103. A helical transmembrane segment spans residues 168–188; the sequence is CGLIVWFQDGKFWVTVDLFME. Over 189 to 222 the chain is Cytoplasmic; sequence KQDYCLYRHNFDSDFPKSMWIIRHRCTSHISPGS. Residues 223–243 traverse the membrane as a helical segment; the sequence is LEILIITMICFVLTIAVYLYI. The Extracellular portion of the chain corresponds to 244–252; the sequence is KKLRNVTGK. Asn-248 is a glycosylation site (N-linked (GlcNAc...) asparagine). Residues 253–273 form a helical membrane-spanning segment; sequence CIVCCIVSRFIQCLIMILDHL. Residues 274–325 are Cytoplasmic-facing; that stretch reads NLLNGICSPAGYSSHFFRMASNLWLSVISYHTWKVLTSLNRVDPNYRFLRYN. Residues 326–346 traverse the membrane as a helical segment; it reads AFVWSTAAIMTGSIYIVNQIW. Residues 347 to 372 lie on the Extracellular side of the membrane; that stretch reads ENDPSKWNWLPLVGFIRCSVKDWHPS. Residues 373–393 traverse the membrane as a helical segment; it reads VWIYISGPSLALSTFNVAMFA. The Cytoplasmic segment spans residues 394–434; that stretch reads LTAIYIRKVKGGINKFTNEEEGRINCINFDSQTYLQFLRLS. A helical transmembrane segment spans residues 435–455; the sequence is IVMGLTWIFNVIPYSARLHIF. Residues 456 to 458 lie on the Extracellular side of the membrane; the sequence is WEW. A helical transmembrane segment spans residues 459–479; the sequence is VGIISEYFHSAFGIVLFVLLV. Over 480–491 the chain is Cytoplasmic; it reads LKRSTWTLMMDS.

The protein belongs to the G-protein coupled receptor 2 family. Mth subfamily.

Its subcellular location is the cell membrane. This is Probable G-protein coupled receptor Mth-like 7 (mthl7) from Drosophila melanogaster (Fruit fly).